The following is a 167-amino-acid chain: Protein archease (167 aa).

Residue Ala-2 is modified to N-acetylalanine. Residues Asp-39, Asp-166, and Ile-167 each contribute to the Ca(2+) site.

The protein belongs to the archease family. Component of the tRNA-splicing ligase complex.

Component of the tRNA-splicing ligase complex required to facilitate the enzymatic turnover of catalytic subunit RTCB. Together with DDX1, acts by facilitating the guanylylation of RTCB, a key intermediate step in tRNA ligation. The chain is Protein archease (ZBTB8OS) from Bos taurus (Bovine).